Here is a 43-residue protein sequence, read N- to C-terminus: Protein PsbN (43 aa).

The helical transmembrane segment at 5–27 threads the bilayer; it reads TLIAISISGLLVSFTGYALYTAF.

It belongs to the PsbN family.

The protein localises to the plastid. The protein resides in the chloroplast thylakoid membrane. Its function is as follows. May play a role in photosystem I and II biogenesis. The protein is Protein PsbN of Phaseolus vulgaris (Kidney bean).